A 101-amino-acid chain; its full sequence is MAKLSLINRDIKRAKLADKYAAKRAELKAIIDDQSKTDEERYQARLKLQQLPRNANPTRQRNRCVVTGRPRGVFRKFGLTRHKLREMAMKGEVPGMTKASW.

This sequence belongs to the universal ribosomal protein uS14 family. As to quaternary structure, part of the 30S ribosomal subunit. Contacts proteins S3 and S10.

Binds 16S rRNA, required for the assembly of 30S particles and may also be responsible for determining the conformation of the 16S rRNA at the A site. This chain is Small ribosomal subunit protein uS14, found in Bordetella parapertussis (strain 12822 / ATCC BAA-587 / NCTC 13253).